Reading from the N-terminus, the 878-residue chain is Aconitase htyD (878 aa).

Residues Q173 and 290–292 (DSH) each bind substrate. The [4Fe-4S] cluster site is built by C472, C535, and C538. The substrate site is built by R558 and R563. Residues 626–671 (IAIANQRTKPAPTMPAYVEPYRSFQPPVPPSSDQPQSMKDHGKTSN) are disordered. 742-743 (SR) contributes to the substrate binding site.

The protein belongs to the aconitase/IPM isomerase family.

It functions in the pathway antifungal biosynthesis. Aconitase; part of the gene cluster that mediates the de novo generation of L-homotyrosine from acetyl-CoA and 4-hydroxyphenyl-pyruvate. L-homotyrosine is a building block of echinocandin B, a fungal lipidated cyclic hexapeptide that acts as an antifungal agent. L-homotyrosine 4-hydroxyphenyl-pyruvate first undergoes an aldol-type condensation by htyA with the C-2 of acetyl-CoA followed by the release of CoA to form 2-(4-hydroxybenzyl)-malate. This is followed by isomerization of 2-(4-hydroxy-benzyl)-malate to 3-(4-hydroxybenzyl)-malate by htyD. Thereafter, 3-(4-hydroxybenzyl)-malate undergoes decarboxylation and oxidation to form 2-oxo-4-(4-hydroxybenzyl)butanoic acid, coupled to reduction of NAD(+) to NADH by htyC. The product then undergoes transamination catalyzed by htyB to form L-homotyrosine. The protein is Aconitase htyD of Aspergillus rugulosus (Emericella rugulosa).